Here is a 429-residue protein sequence, read N- to C-terminus: Carbamoyl phosphate synthase arginine-specific small chain (429 aa).

The N-terminal 20 residues, 1–20 (MIRVIQPPLIASKQLFRRYL), are a transit peptide targeting the mitochondrion. Positions 218–406 (HIAVLDCGAK…FENIEQYRAT (189 aa)) constitute a Glutamine amidotransferase type-1 domain. The active-site Nucleophile is the Cys295. Residues His379 and Glu381 contribute to the active site.

The protein belongs to the CarA family. Heterodimer composed of 2 chains; the small (or glutamine) chain promotes the hydrolysis of glutamine to ammonia, which is used by the large (or ammonia) chain to synthesize carbamoyl phosphate.

It is found in the mitochondrion matrix. It catalyses the reaction hydrogencarbonate + L-glutamine + 2 ATP + H2O = carbamoyl phosphate + L-glutamate + 2 ADP + phosphate + 2 H(+). The catalysed reaction is L-glutamine + H2O = L-glutamate + NH4(+). It participates in amino-acid biosynthesis; L-arginine biosynthesis; carbamoyl phosphate from bicarbonate: step 1/1. Small subunit of the arginine-specific carbamoyl phosphate synthase (CPSase). CPSase catalyzes the formation of carbamoyl phosphate from the ammonia moiety of glutamine, carbonate, and phosphate donated by ATP, the first step of the arginine biosynthetic pathway. The small subunit (glutamine amidotransferase) binds and cleaves glutamine to supply the large subunit with the substrate ammonia. This Debaryomyces hansenii (strain ATCC 36239 / CBS 767 / BCRC 21394 / JCM 1990 / NBRC 0083 / IGC 2968) (Yeast) protein is Carbamoyl phosphate synthase arginine-specific small chain (CPA1).